The chain runs to 313 residues: Dehydrodolichyl diphosphate synthase CPT5, chloroplastic (313 aa).

Residues 1 to 42 constitute a chloroplast transit peptide; sequence MAFSFQLQQVFPFPVKFCSQPKSIKLQIFPNLTKRLPIHPLA. The active site involves D89.

The protein belongs to the UPP synthase family. Mg(2+) is required as a cofactor. In terms of tissue distribution, expressed in leaf trichomes, stem trichomes and old leaves. Expressed at low levels in young leaves and flowers.

It is found in the plastid. The protein resides in the chloroplast. The enzyme catalyses n isopentenyl diphosphate + (2E,6E)-farnesyl diphosphate = a di-trans,poly-cis-polyprenyl diphosphate + n diphosphate. Functionally, catalyzes cis-prenyl chain elongation to produce the polyprenyl backbone of dolichol, a glycosyl carrier-lipid required for the biosynthesis of several classes of glycoprotein. This Solanum lycopersicum (Tomato) protein is Dehydrodolichyl diphosphate synthase CPT5, chloroplastic.